Consider the following 149-residue polypeptide: Heat shock protein beta-3 (149 aa).

The sHSP domain occupies 47-149 (KARAAQAPPV…VEVKDSAGTK (103 aa)).

It belongs to the small heat shock protein (HSP20) family.

It localises to the cytoplasm. Its subcellular location is the nucleus. Inhibitor of actin polymerization. This chain is Heat shock protein beta-3 (HSPB3), found in Bos taurus (Bovine).